We begin with the raw amino-acid sequence, 708 residues long: Meiotic sister-chromatid recombination protein 6, mitochondrial (708 aa).

The transit peptide at 1-15 (MLSVRISARQCSVRG) directs the protein to the mitochondrion. A compositionally biased stretch (polar residues) spans 19–36 (QANNVSQPAKDNATNGSD). A disordered region spans residues 19-44 (QANNVSQPAKDNATNGSDAATEKKGT).

The protein resides in the mitochondrion. In terms of biological role, may be involved in the control of meiotic sister-chromatid recombination. This chain is Meiotic sister-chromatid recombination protein 6, mitochondrial (MSC6), found in Kluyveromyces lactis (strain ATCC 8585 / CBS 2359 / DSM 70799 / NBRC 1267 / NRRL Y-1140 / WM37) (Yeast).